Reading from the N-terminus, the 24-residue chain is Grammistin Gs G (24 aa).

It belongs to the grammistin family. Group 1 subfamily. As to quaternary structure, exists as aggregates of 3-4 molecules. In terms of tissue distribution, expressed by the skin glands.

It is found in the secreted. Its function is as follows. Thanks to its abundant amphiphilic alpha-helices, it may integrate into membrane phospholipids, leading to lysis of the membrane. Its high hemolytic activity is inhibited by phospholipids, but not by cholesterol. Has antibacterial activity with a broad spectrum against various species of bacteria including both Gram-positive and Gram-negative groups. Also has high ichthyotoxic activity. This is Grammistin Gs G from Grammistes sexlineatus (Goldenstriped soapfish).